Here is a 2057-residue protein sequence, read N- to C-terminus: Protein TIC 214 (2057 aa).

The next 4 helical transmembrane spans lie at Lys-13–Ile-33, Leu-62–Leu-82, Leu-158–Phe-178, and Ser-206–Gly-226. The stretch at Leu-248 to Ser-340 forms a coiled coil. A compositionally biased stretch (basic residues) spans Asn-288–Thr-302. Disordered regions lie at residues Asn-288–Thr-316, Glu-614–Gly-807, Asp-890–Val-910, Glu-1597–Asp-1634, and Lys-1724–Ser-1817. Basic and acidic residues-rich tracts occupy residues Ala-621–Lys-657 and Asn-665–Lys-702. Residues Asn-704–Asn-713 show a composition bias toward polar residues. Composition is skewed to basic and acidic residues over residues Lys-714 to Gly-807 and Glu-891 to Lys-900. A compositionally biased stretch (acidic residues) spans Glu-1597–Ile-1619. Polar residues predominate over residues Ser-1622–Asp-1634. Basic and acidic residues predominate over residues Thr-1753–Ser-1817.

The protein belongs to the TIC214 family. As to quaternary structure, part of the Tic complex.

Its subcellular location is the plastid. It is found in the chloroplast inner membrane. In terms of biological role, involved in protein precursor import into chloroplasts. May be part of an intermediate translocation complex acting as a protein-conducting channel at the inner envelope. This is Protein TIC 214 from Ipomoea purpurea (Common morning glory).